A 711-amino-acid polypeptide reads, in one-letter code: Long-chain-fatty-acid--CoA ligase 4 (711 aa).

A helical; Signal-anchor for type III membrane protein transmembrane segment spans residues 8–28 (LTIILLPVHLLITIYSALIFI). Topologically, residues 29 to 711 (PWYFLTNAKK…KDIERMYGGK (683 aa)) are cytoplasmic. Ser447 is modified (phosphoserine).

The protein belongs to the ATP-dependent AMP-binding enzyme family. Requires Mg(2+) as cofactor.

Its subcellular location is the mitochondrion outer membrane. The protein resides in the peroxisome membrane. It localises to the microsome membrane. The protein localises to the endoplasmic reticulum membrane. It is found in the cell membrane. It carries out the reaction a long-chain fatty acid + ATP + CoA = a long-chain fatty acyl-CoA + AMP + diphosphate. The catalysed reaction is (5Z,8Z,11Z,14Z)-eicosatetraenoate + ATP + CoA = (5Z,8Z,11Z,14Z)-eicosatetraenoyl-CoA + AMP + diphosphate. The enzyme catalyses hexadecanoate + ATP + CoA = hexadecanoyl-CoA + AMP + diphosphate. It catalyses the reaction (E)-hexadec-2-enoate + ATP + CoA = (2E)-hexadecenoyl-CoA + AMP + diphosphate. It carries out the reaction 15-hydroxy-(5Z,8Z,11Z,13E)-eicosatetraenoate + ATP + CoA = 15-hydroxy-(5Z,8Z,11Z,13E)-eicosatetraenoyl-CoA + AMP + diphosphate. The catalysed reaction is 12-hydroxy-(5Z,8Z,10E,14Z)-eicosatetraenoate + ATP + CoA = 12-hydroxy-(5Z,8Z,10E,14Z)-eicosatetraenoyl-CoA + AMP + diphosphate. The enzyme catalyses 5-hydroxy-(6E,8Z,11Z,14Z)-eicosatetraenoate + ATP + CoA = 5-hydroxy-(6E,8Z,11Z,14Z)-eicosatetraenoyl-CoA + AMP + diphosphate. It catalyses the reaction 5,6-epoxy-(8Z,11Z,14Z)-eicosatrienoate + ATP + CoA = 5,6-epoxy-(8Z,11Z,14Z)-eicosatrienoyl-CoA + AMP + diphosphate. It carries out the reaction 14,15-epoxy-(5Z,8Z,11Z)-eicosatrienoate + ATP + CoA = 14,15-epoxy-(5Z,8Z,11Z)-eicosatrienoyl-CoA + AMP + diphosphate. The catalysed reaction is 11,12-epoxy-(5Z,8Z,14Z)-eicosatrienoate + ATP + CoA = 11,12-epoxy-(5Z,8Z,14Z)-eicosatrienoyl-CoA + AMP + diphosphate. The enzyme catalyses 8,9-epoxy-(5Z,11Z,14Z)-eicosatrienoate + ATP + CoA = 8,9-epoxy-(5Z,11Z,14Z)-eicosatrienoyl-CoA + AMP + diphosphate. Both triacsin C and rosiglitazone inhibit arachidonoyl-CoA ligase activity. In terms of biological role, catalyzes the conversion of long-chain fatty acids to their active form acyl-CoA for both synthesis of cellular lipids, and degradation via beta-oxidation. Preferentially activates arachidonate and eicosapentaenoate as substrates. Preferentially activates 8,9-EET &gt; 14,15-EET &gt; 5,6-EET &gt; 11,12-EET. Modulates glucose-stimulated insulin secretion by regulating the levels of unesterified EETs. Modulates prostaglandin E2 secretion. The protein is Long-chain-fatty-acid--CoA ligase 4 (ACSL4) of Homo sapiens (Human).